The primary structure comprises 2005 residues: Structural maintenance of chromosomes flexible hinge domain-containing protein 1 (2005 aa).

The span at 1–13 (MAAADGGGPGGAS) shows a compositional bias: gly residues. A disordered region spans residues 1–23 (MAAADGGGPGGASVGTEEDGGGV). N-acetylalanine is present on Ala2. Residues 111–702 (TKERIDFLPH…LSVTWPEGDE (592 aa)) are ATPase activity domain. Lys1349 is modified (N6-acetyllysine). Glycyl lysine isopeptide (Lys-Gly) (interchain with G-Cter in SUMO2) cross-links involve residues Lys1374 and Lys1496. A Phosphothreonine modification is found at Thr1499. Residues 1720–1847 (GDVLGKIAHL…DNLDAANHYR (128 aa)) form the SMC hinge domain. Lys1802 bears the N6-succinyllysine mark. Ser1974 carries the post-translational modification Phosphoserine.

This sequence belongs to the SMC family. Highly divergent. Homodimer; homodimerizes via its SMC hinge domain. Interacts with LRIF1. Post-translationally, sumoylated with SUMO1.

Its subcellular location is the chromosome. It catalyses the reaction ATP + H2O = ADP + phosphate + H(+). Functionally, non-canonical member of the structural maintenance of chromosomes (SMC) protein family that plays a key role in epigenetic silencing by regulating chromatin architecture. Promotes heterochromatin formation in both autosomes and chromosome X, probably by mediating the merge of chromatin compartments. Plays a key role in chromosome X inactivation in females by promoting the spreading of heterochromatin. Recruited to inactivated chromosome X by Xist RNA and acts by mediating the merge of chromatin compartments: promotes random chromatin interactions that span the boundaries of existing structures, leading to create a compartment-less architecture typical of inactivated chromosome X. Required to facilitate Xist RNA spreading. Also required for silencing of a subset of clustered autosomal loci in somatic cells, such as the DUX4 locus. Has ATPase activity; may participate in structural manipulation of chromatin in an ATP-dependent manner as part of its role in gene expression regulation. Also plays a role in DNA repair: localizes to sites of DNA double-strand breaks in response to DNA damage to promote the repair of DNA double-strand breaks. Acts by promoting non-homologous end joining (NHEJ) and inhibiting homologous recombination (HR) repair. The polypeptide is Structural maintenance of chromosomes flexible hinge domain-containing protein 1 (Homo sapiens (Human)).